The following is a 315-amino-acid chain: uncharacterized protein (315 aa).

This is an uncharacterized protein from Bos taurus (Bovine).